A 778-amino-acid polypeptide reads, in one-letter code: Endonuclease MutS2 (778 aa).

Position 328 to 335 (328 to 335 (GPNTGGKT)) interacts with ATP. Residues 702 to 777 (LDLRGKRYEE…GSGATIVTFK (76 aa)) enclose the Smr domain.

Belongs to the DNA mismatch repair MutS family. MutS2 subfamily. Homodimer. Binds to stalled ribosomes, contacting rRNA.

Functionally, endonuclease that is involved in the suppression of homologous recombination and thus may have a key role in the control of bacterial genetic diversity. Acts as a ribosome collision sensor, splitting the ribosome into its 2 subunits. Detects stalled/collided 70S ribosomes which it binds and splits by an ATP-hydrolysis driven conformational change. Acts upstream of the ribosome quality control system (RQC), a ribosome-associated complex that mediates the extraction of incompletely synthesized nascent chains from stalled ribosomes and their subsequent degradation. Probably generates substrates for RQC. The sequence is that of Endonuclease MutS2 from Streptococcus pneumoniae (strain Taiwan19F-14).